Here is a 110-residue protein sequence, read N- to C-terminus: Protein RnfH (110 aa).

Positions 86–110 are disordered; the sequence is RQRRVEKSRQEGSVEGRKWLPKDSR. Over residues 88–110 the composition is skewed to basic and acidic residues; the sequence is RRVEKSRQEGSVEGRKWLPKDSR.

It belongs to the UPF0125 (RnfH) family.

The protein is Protein RnfH of Paraburkholderia phymatum (strain DSM 17167 / CIP 108236 / LMG 21445 / STM815) (Burkholderia phymatum).